The following is a 291-amino-acid chain: MKSGFVSIIGRTNAGKSTLINSLLEEKIALVSHKQNATRRKIKAIVMHEKNQIIFIDTPGLHESGATLNQLLVQSAIKSIGDCDVILFVASVFDSTKDYENFLSLNPQVPHIIALNKVDLTDNATLLKKLSEYAKFSQHFKAIIPYSSKKKSYKKGLLDEIVKYLDEHEYFYDPEFLSASSEKELYRDFILESIYENLSDELPYSSEVLINRTKDTPNLLILEANIITDTNSHKGMLIGKEGATLKRIGKDARFKISKLAQKKVLLKLFVTVKKNWQKDEEFLKKLLNDEN.

The Era-type G domain maps to 2–167 (KSGFVSIIGR…LDEIVKYLDE (166 aa)). The G1 stretch occupies residues 10–17 (GRTNAGKS). Residue 10–17 (GRTNAGKS) participates in GTP binding. The G2 stretch occupies residues 36-40 (NATRR). The interval 57–60 (DTPG) is G3. GTP contacts are provided by residues 57-61 (DTPGL) and 116-119 (NKVD). The interval 116 to 119 (NKVD) is G4. Residues 146–148 (YSS) are G5. The 89-residue stretch at 186–274 (YRDFILESIY…LLKLFVTVKK (89 aa)) folds into the KH type-2 domain.

It belongs to the TRAFAC class TrmE-Era-EngA-EngB-Septin-like GTPase superfamily. Era GTPase family. As to quaternary structure, monomer.

It localises to the cytoplasm. It is found in the cell inner membrane. In terms of biological role, an essential GTPase that binds both GDP and GTP, with rapid nucleotide exchange. Plays a role in 16S rRNA processing and 30S ribosomal subunit biogenesis and possibly also in cell cycle regulation and energy metabolism. The sequence is that of GTPase Era from Campylobacter jejuni subsp. jejuni serotype O:23/36 (strain 81-176).